The chain runs to 178 residues: MKLLAPVLWAMAALGVTWLVAVDSKESCTKHSNGCSTPLRLPCQEYFRPACDIHDNCYHCGKTFGISREECDKAFLKDMNTLCKKLGSNSATCPARGKREVTSHRATSIAHSRLWKTALDQKSFLNRKARQVFFLLPTTCQGWAKNYHLAVKLAGANSYSVTTDLETCQGLEHCLPNH.

The first 24 residues, 1-24, serve as a signal peptide directing secretion; sequence MKLLAPVLWAMAALGVTWLVAVDS. The residue at position 38 (proline 38) is a 4-hydroxyproline. 4-hydroxyproline; partial occurs at positions 42 and 49. Histidine 54 is a catalytic residue. Positions 98-130 are cleaved as a propeptide — interchain peptide; it reads KREVTSHRATSIAHSRLWKTALDQKSFLNRKAR. Glutamine 131 carries the post-translational modification Pyrrolidone carboxylic acid. Proline 137 carries the 4-hydroxyproline; partial modification.

The protein belongs to the phospholipase A2 family. Group IX subfamily. As to quaternary structure, heterodimer of an alpha and a beta chain; probably disulfide-linked. Requires Ca(2+) as cofactor. As to expression, expressed by the venom duct.

Its subcellular location is the secreted. The catalysed reaction is a 1,2-diacyl-sn-glycero-3-phosphocholine + H2O = a 1-acyl-sn-glycero-3-phosphocholine + a fatty acid + H(+). Catalyzes the calcium-dependent hydrolysis of the 2-acyl groups in 3-sn-phosphoglycerides. This Conus purpurascens (Purple cone) protein is Conodipine-P3.